A 101-amino-acid polypeptide reads, in one-letter code: Movement protein (101 aa).

A helical membrane pass occupies residues 30 to 50; it reads EVAVLSFVALICIYLLYLWVL. The segment at 78–101 is disordered; that stretch reads RSPIPNTLEPTAPVHPGPFVPGSG. Positions 90 to 101 are enriched in pro residues; it reads PVHPGPFVPGSG.

The protein belongs to the mastrevirus movement protein family. In terms of assembly, interacts with the capsid protein (CP). Part of a MP-CP-viral DNA complex.

Its subcellular location is the host membrane. In terms of biological role, involved in the viral transport within, and between cells. The chain is Movement protein from Maize streak virus genotype E (isolate Pat) (MSV).